The sequence spans 736 residues: Polyribonucleotide nucleotidyltransferase (736 aa).

Residues D506 and D512 each contribute to the Mg(2+) site. Residues 573 to 632 (PRLTTIQVPVDAIGLIIGKGGETIRSITEETGAEINIEDDGTVTIACSSVEGTHAALATI) form the KH domain. Positions 642 to 717 (GTIYLGKVRD…GKTRFALSMR (76 aa)) constitute an S1 motif domain.

The protein belongs to the polyribonucleotide nucleotidyltransferase family. Mg(2+) serves as cofactor.

It localises to the cytoplasm. It catalyses the reaction RNA(n+1) + phosphate = RNA(n) + a ribonucleoside 5'-diphosphate. Functionally, involved in mRNA degradation. Catalyzes the phosphorolysis of single-stranded polyribonucleotides processively in the 3'- to 5'-direction. The chain is Polyribonucleotide nucleotidyltransferase from Chlorobium limicola (strain DSM 245 / NBRC 103803 / 6330).